The sequence spans 1302 residues: Phosphoribosylformylglycinamidine synthase (1302 aa).

ATP-binding positions include 307–318 (GASTGSGGEIRD) and Ala-678. 3 residues coordinate Mg(2+): Glu-718, Asn-722, and Asp-891. In terms of domain architecture, Glutamine amidotransferase type-1 spans 1049–1302 (MAILREQGVN…MFQNARKNIG (254 aa)). Residue Cys-1142 is the Nucleophile of the active site. Residues His-1267 and Glu-1269 contribute to the active site.

This sequence in the N-terminal section; belongs to the FGAMS family. In terms of assembly, monomer.

It is found in the cytoplasm. It carries out the reaction N(2)-formyl-N(1)-(5-phospho-beta-D-ribosyl)glycinamide + L-glutamine + ATP + H2O = 2-formamido-N(1)-(5-O-phospho-beta-D-ribosyl)acetamidine + L-glutamate + ADP + phosphate + H(+). It functions in the pathway purine metabolism; IMP biosynthesis via de novo pathway; 5-amino-1-(5-phospho-D-ribosyl)imidazole from N(2)-formyl-N(1)-(5-phospho-D-ribosyl)glycinamide: step 1/2. Its function is as follows. Phosphoribosylformylglycinamidine synthase involved in the purines biosynthetic pathway. Catalyzes the ATP-dependent conversion of formylglycinamide ribonucleotide (FGAR) and glutamine to yield formylglycinamidine ribonucleotide (FGAM) and glutamate. The sequence is that of Phosphoribosylformylglycinamidine synthase from Vibrio parahaemolyticus serotype O3:K6 (strain RIMD 2210633).